Here is a 122-residue protein sequence, read N- to C-terminus: Large ribosomal subunit protein uL14 (122 aa).

It belongs to the universal ribosomal protein uL14 family. In terms of assembly, part of the 50S ribosomal subunit. Forms a cluster with proteins L3 and L19. In the 70S ribosome, L14 and L19 interact and together make contacts with the 16S rRNA in bridges B5 and B8.

Binds to 23S rRNA. Forms part of two intersubunit bridges in the 70S ribosome. The polypeptide is Large ribosomal subunit protein uL14 (Citrifermentans bemidjiense (strain ATCC BAA-1014 / DSM 16622 / JCM 12645 / Bem) (Geobacter bemidjiensis)).